The chain runs to 663 residues: DNA ligase (663 aa).

Residues D31–D35, S80–L81, and E109 contribute to the NAD(+) site. K111 functions as the N6-AMP-lysine intermediate in the catalytic mechanism. R132, E166, K282, and K306 together coordinate NAD(+). Zn(2+) is bound by residues C400, C403, C418, and C423. Residues E585–N663 form the BRCT domain.

Belongs to the NAD-dependent DNA ligase family. LigA subfamily. Mg(2+) serves as cofactor. It depends on Mn(2+) as a cofactor.

The enzyme catalyses NAD(+) + (deoxyribonucleotide)n-3'-hydroxyl + 5'-phospho-(deoxyribonucleotide)m = (deoxyribonucleotide)n+m + AMP + beta-nicotinamide D-nucleotide.. Functionally, DNA ligase that catalyzes the formation of phosphodiester linkages between 5'-phosphoryl and 3'-hydroxyl groups in double-stranded DNA using NAD as a coenzyme and as the energy source for the reaction. It is essential for DNA replication and repair of damaged DNA. The protein is DNA ligase of Macrococcus caseolyticus (strain JCSC5402) (Macrococcoides caseolyticum).